A 258-amino-acid chain; its full sequence is MTLIHPTAVIDPKAELDSSVKVGAYTVIGPNVQIGANTEIGPHAVINGHTSIGENNRIFQFASLGEIPQDKKYRDEPTKLIIGNGNTIREFTTFNLGTVTGIGETRIGDDNWIMAYCHLAHDCVVGNHTIFANNASLAGHVTIGDYVVLGGYTLVFQFCRIGDYAMTAFAAGVHKDVPPYFMASGYRAEPAGLNSEGMRRNGFTAEQISAVKDVYKTLYHRGIPFEEAKADILRRAETQAELAVFRDFFAQSARGIIR.

This sequence belongs to the transferase hexapeptide repeat family. LpxA subfamily. As to quaternary structure, homotrimer.

It is found in the cytoplasm. The enzyme catalyses a (3R)-hydroxyacyl-[ACP] + UDP-N-acetyl-alpha-D-glucosamine = a UDP-3-O-[(3R)-3-hydroxyacyl]-N-acetyl-alpha-D-glucosamine + holo-[ACP]. It participates in glycolipid biosynthesis; lipid IV(A) biosynthesis; lipid IV(A) from (3R)-3-hydroxytetradecanoyl-[acyl-carrier-protein] and UDP-N-acetyl-alpha-D-glucosamine: step 1/6. Involved in the biosynthesis of lipid A, a phosphorylated glycolipid that anchors the lipopolysaccharide to the outer membrane of the cell. The chain is Acyl-[acyl-carrier-protein]--UDP-N-acetylglucosamine O-acyltransferase from Neisseria meningitidis serogroup A / serotype 4A (strain DSM 15465 / Z2491).